Here is a 71-residue protein sequence, read N- to C-terminus: Pro-MCH (71 aa).

A signal peptide spans 1-20; that stretch reads AKMNLSSYILILTFSLFSQG.

The protein belongs to the melanin-concentrating hormone family.

The protein localises to the secreted. This Hylobates lar (Lar gibbon) protein is Pro-MCH (PMCH).